The chain runs to 267 residues: 4-hydroxy-tetrahydrodipicolinate reductase (267 aa).

An NAD(+)-binding site is contributed by 10 to 15; sequence GANGRM. Arginine 37 provides a ligand contact to NADP(+). NAD(+) is bound by residues 98-100 and 122-125; these read GTT and ARNY. The active-site Proton donor/acceptor is the histidine 155. Histidine 156 contacts (S)-2,3,4,5-tetrahydrodipicolinate. Residue lysine 159 is the Proton donor of the active site. Residue 165–166 participates in (S)-2,3,4,5-tetrahydrodipicolinate binding; it reads GT.

It belongs to the DapB family.

The protein resides in the cytoplasm. The catalysed reaction is (S)-2,3,4,5-tetrahydrodipicolinate + NAD(+) + H2O = (2S,4S)-4-hydroxy-2,3,4,5-tetrahydrodipicolinate + NADH + H(+). It catalyses the reaction (S)-2,3,4,5-tetrahydrodipicolinate + NADP(+) + H2O = (2S,4S)-4-hydroxy-2,3,4,5-tetrahydrodipicolinate + NADPH + H(+). The protein operates within amino-acid biosynthesis; L-lysine biosynthesis via DAP pathway; (S)-tetrahydrodipicolinate from L-aspartate: step 4/4. Its function is as follows. Catalyzes the conversion of 4-hydroxy-tetrahydrodipicolinate (HTPA) to tetrahydrodipicolinate. This chain is 4-hydroxy-tetrahydrodipicolinate reductase, found in Pseudoalteromonas translucida (strain TAC 125).